We begin with the raw amino-acid sequence, 294 residues long: MLENLSTEHRNEKTMNLDEMSIKEILQSMNEEDRTVALAVENEIEQIEKVVQTVIKSFEEEGRLIYIGAGTSGRLGILDAVECPPTFGTDDKMVQGFIAGGLKAFTKAVEGAEDREELADEDLKSIGLNEKDTVIGIAASGRTPYVIGGLKYANRVGASTASISCNKNAEISKYAKINVEVGTGAEILTGSTRLKAGTAQKLVLNMISTASMIGVGKVYKNLMVDVQSTNEKLVERSKRIIVEATGVSYEVAAEYYEKAERNVKAAIVMVLLQCEYGEALQKLKEAKGFVKKAL.

The SIS domain occupies 54–217 (VIKSFEEEGR…STASMIGVGK (164 aa)). The Proton donor role is filled by Glu82. Glu113 is a catalytic residue.

The protein belongs to the GCKR-like family. MurNAc-6-P etherase subfamily. In terms of assembly, homodimer.

It carries out the reaction N-acetyl-D-muramate 6-phosphate + H2O = N-acetyl-D-glucosamine 6-phosphate + (R)-lactate. It functions in the pathway amino-sugar metabolism; N-acetylmuramate degradation. Its function is as follows. Specifically catalyzes the cleavage of the D-lactyl ether substituent of MurNAc 6-phosphate, producing GlcNAc 6-phosphate and D-lactate. This is N-acetylmuramic acid 6-phosphate etherase from Bacillus cereus (strain ATCC 10987 / NRS 248).